Here is a 354-residue protein sequence, read N- to C-terminus: Homer protein homolog 2 (354 aa).

A WH1 domain is found at 1-110 (MGEQPIFTTR…EKFQEVKEAA (110 aa)). A coiled-coil region spans residues 92-122 (SEQQLTKFAEKFQEVKEAAKIAKDKTQEKIE). The span at 112-122 (IAKDKTQEKIE) shows a compositional bias: basic and acidic residues. The segment at 112–166 (IAKDKTQEKIETSSNHSQESGRETPSSTQASSVNGTDDEKASHAGPANTHLKSEN) is disordered. The span at 123–146 (TSSNHSQESGRETPSSTQASSVNG) shows a compositional bias: polar residues. Positions 160-329 (THLKSENDKL…RHLKVELKSF (170 aa)) form a coiled coil.

The protein belongs to the Homer family. As to quaternary structure, forms coiled-coil structures that mediate homo- and heteromultimerization. Interacts with NFATC2; interaction is reduced by AKT activation. Interacts with NFATC1 and NFATC4. Interacts with DAGLA (via PPXXF motif); this interaction is required for the cell membrane localization of DAGLA.

It is found in the cytoplasm. It localises to the cell membrane. The protein resides in the postsynaptic density. The protein localises to the synapse. Its subcellular location is the cell projection. It is found in the stereocilium. Its function is as follows. Postsynaptic density scaffolding protein. Binds and cross-links cytoplasmic regions of GRM1, GRM5, ITPR1, DNM3, RYR1, RYR2, SHANK1 and SHANK3. By physically linking GRM1 and GRM5 with ER-associated ITPR1 receptors, it aids the coupling of surface receptors to intracellular calcium release. May also couple GRM1 to PI3 kinase through its interaction with AGAP2. Isoforms can be differently regulated and may play an important role in maintaining the plasticity at glutamatergic synapses. Required for normal hearing. Negatively regulates T cell activation by inhibiting the calcineurin-NFAT pathway. Acts by competing with calcineurin/PPP3CA for NFAT protein binding, hence preventing NFAT activation by PPP3CA. The sequence is that of Homer protein homolog 2 from Homo sapiens (Human).